An 815-amino-acid polypeptide reads, in one-letter code: uncharacterized protein (815 aa).

Positions cysteine 31–cysteine 57 form a DNA-binding region, zn(2)-C6 fungal-type. The helical transmembrane segment at tyrosine 560 to leucine 580 threads the bilayer. Disordered regions lie at residues glutamate 646–glutamine 668 and aspartate 769–threonine 792. Residues serine 780–threonine 792 are compositionally biased toward polar residues.

The protein localises to the cytoplasm. Its subcellular location is the nucleus membrane. This is an uncharacterized protein from Schizosaccharomyces pombe (strain 972 / ATCC 24843) (Fission yeast).